Consider the following 424-residue polypeptide: Probable methyltransferase EP424R (424 aa).

The Adrift-type SAM-dependent 2'-O-MTase domain occupies 103–315 (QIVTNAWLKM…TYIVGKNRLR (213 aa)). The S-adenosyl-L-methionine site is built by Gly-135 and Asp-228. Residue Lys-268 is the Proton acceptor of the active site.

It localises to the virion. The chain is Probable methyltransferase EP424R from Ornithodoros (relapsing fever ticks).